Consider the following 485-residue polypeptide: Glutamate--tRNA ligase (485 aa).

Residues 12–22 (PSPTGYMHVGN) carry the 'HIGH' region motif. Zn(2+) is bound by residues Cys109, Cys111, Cys136, and His138. The 'KMSKS' region motif lies at 253-257 (KLSKR). Lys256 is a binding site for ATP.

Belongs to the class-I aminoacyl-tRNA synthetase family. Glutamate--tRNA ligase type 1 subfamily. As to quaternary structure, monomer. The cofactor is Zn(2+).

Its subcellular location is the cytoplasm. The catalysed reaction is tRNA(Glu) + L-glutamate + ATP = L-glutamyl-tRNA(Glu) + AMP + diphosphate. Its function is as follows. Catalyzes the attachment of glutamate to tRNA(Glu) in a two-step reaction: glutamate is first activated by ATP to form Glu-AMP and then transferred to the acceptor end of tRNA(Glu). In Clostridium botulinum (strain Eklund 17B / Type B), this protein is Glutamate--tRNA ligase.